A 300-amino-acid polypeptide reads, in one-letter code: Inositol polyphosphate multikinase beta (300 aa).

S78 bears the Phosphoserine mark.

It belongs to the inositol phosphokinase (IPK) family. Interacts with KIN10 and KIN11. Post-translationally, phosphorylated by KIN10. In terms of tissue distribution, expressed in leaves, stems, roots, siliques and flowers. Detected in vascular strands, stigma cells, the abscission zones of fully elongated siliques, the root central cylinder and the root tip.

The protein localises to the nucleus. It carries out the reaction 1D-myo-inositol 1,4,5-trisphosphate + 2 ATP = 1D-myo-inositol 1,3,4,5,6-pentakisphosphate + 2 ADP + 2 H(+). It catalyses the reaction 1D-myo-inositol 1,3,4,6-tetrakisphosphate + ATP = 1D-myo-inositol 1,3,4,5,6-pentakisphosphate + ADP + H(+). With respect to regulation, down-regulated by KIN10 through its protein phosphorylation. Inositol phosphate kinase with a broad substrate specificity. Phosphorylates inositol 1,4,5-trisphosphate (Ins(1,4,5)P3), inositol 1,4,5,6-tetrakisphosphate (Ins(1,4,5,6)P4), inositol 1,3,4,5-tetrakisphosphate (Ins(1,3,4,5)P4), inositol 1,3,4,6-tetrakisphosphate (Ins(1,3,4,6)P4) and inositol 1,2,3,4,6-pentakisphosphate (Ins(1,2,3,4,6)P5) but not inositol 1,4-bisphosphate (Ins(1,4)P2), inositol 1,3,4-trisphosphate (Ins(1,3,4)P3), inositol 1,2,6-trisphosphate (Ins(1,2,6)P3), inositol 3,4,5,6-tetrakisphosphate (Ins(3,4,5,6)P4), inositol 1,3,4,5,6-pentakisphosphate (Ins(1,3,4,5,6)P5), inositol 1,2,4,5,6-pentakisphosphate (Ins(1,2,4,5,6)P5) or inositol hexakisphosphate (InsP6). Involved in the auxin signaling pathway. Regulates axillary shoot branching and is required for phytate synthesis in seeds. This Arabidopsis thaliana (Mouse-ear cress) protein is Inositol polyphosphate multikinase beta (IPK2b).